The primary structure comprises 459 residues: ADP-specific phosphofructokinase (459 aa).

Positions 1-457 constitute an ADPK domain; that stretch reads MMEFLKDFQK…FASYLSLLKR (457 aa). The Mg(2+) site is built by E268, E298, and D441. The active-site Proton acceptor is the D441.

Belongs to the carbohydrate kinase PfkC family. The cofactor is Mg(2+).

It localises to the cytoplasm. The catalysed reaction is beta-D-fructose 6-phosphate + ADP = beta-D-fructose 1,6-bisphosphate + AMP + H(+). It functions in the pathway carbohydrate degradation; glycolysis. Its function is as follows. Catalyzes the phosphorylation of fructose 6-phosphate to fructose 1,6-bisphosphate using ADP as the phosphate donor. This is ADP-specific phosphofructokinase from Thermococcus litoralis.